We begin with the raw amino-acid sequence, 513 residues long: 2,3-bisphosphoglycerate-independent phosphoglycerate mutase (513 aa).

Mn(2+) contacts are provided by aspartate 15 and serine 65. Serine 65 functions as the Phosphoserine intermediate in the catalytic mechanism. Substrate-binding positions include histidine 126, 156 to 157 (RD), arginine 188, arginine 194, 263 to 266 (RADR), and lysine 337. Residues aspartate 402, histidine 406, aspartate 443, histidine 444, and histidine 461 each contribute to the Mn(2+) site.

It belongs to the BPG-independent phosphoglycerate mutase family. As to quaternary structure, monomer. Requires Mn(2+) as cofactor.

The enzyme catalyses (2R)-2-phosphoglycerate = (2R)-3-phosphoglycerate. It participates in carbohydrate degradation; glycolysis; pyruvate from D-glyceraldehyde 3-phosphate: step 3/5. In terms of biological role, catalyzes the interconversion of 2-phosphoglycerate and 3-phosphoglycerate. This is 2,3-bisphosphoglycerate-independent phosphoglycerate mutase from Moorella thermoacetica (strain ATCC 39073 / JCM 9320).